Consider the following 450-residue polypeptide: UDP-N-acetylmuramoylalanine--D-glutamate ligase (450 aa).

Position 119-125 (Gly-119–Thr-125) interacts with ATP.

Belongs to the MurCDEF family.

The protein localises to the cytoplasm. The enzyme catalyses UDP-N-acetyl-alpha-D-muramoyl-L-alanine + D-glutamate + ATP = UDP-N-acetyl-alpha-D-muramoyl-L-alanyl-D-glutamate + ADP + phosphate + H(+). Its pathway is cell wall biogenesis; peptidoglycan biosynthesis. Cell wall formation. Catalyzes the addition of glutamate to the nucleotide precursor UDP-N-acetylmuramoyl-L-alanine (UMA). The chain is UDP-N-acetylmuramoylalanine--D-glutamate ligase from Bacillus cereus (strain G9842).